A 348-amino-acid polypeptide reads, in one-letter code: Histidinol-phosphate aminotransferase (348 aa).

At Lys-211 the chain carries N6-(pyridoxal phosphate)lysine.

This sequence belongs to the class-II pyridoxal-phosphate-dependent aminotransferase family. Histidinol-phosphate aminotransferase subfamily. As to quaternary structure, homodimer. The cofactor is pyridoxal 5'-phosphate.

The enzyme catalyses L-histidinol phosphate + 2-oxoglutarate = 3-(imidazol-4-yl)-2-oxopropyl phosphate + L-glutamate. The protein operates within amino-acid biosynthesis; L-histidine biosynthesis; L-histidine from 5-phospho-alpha-D-ribose 1-diphosphate: step 7/9. The polypeptide is Histidinol-phosphate aminotransferase (Pseudomonas entomophila (strain L48)).